Here is a 292-residue protein sequence, read N- to C-terminus: Secreted frizzled-related protein 2 (292 aa).

The signal sequence occupies residues 1-20 (MPRRLCALLLLASQCLGSTA). The FZ domain maps to 32 to 152 (YKRSNCKPIP…PKDNDLCIPL (121 aa)). Cystine bridges form between Cys37–Cys100, Cys47–Cys93, Cys84–Cys122, Cys111–Cys149, Cys115–Cys139, Cys169–Cys242, and Cys187–Cys292. Residues 169-292 (CDACKNKNED…FSRSIRKLQC (124 aa)) form the NTR domain.

It belongs to the secreted frizzled-related protein (sFRP) family.

It is found in the secreted. In terms of biological role, soluble frizzled-related proteins (sFRPS) function as modulators of Wnt signaling through direct interaction with Wnts. They have a role in regulating cell growth and differentiation in specific cell types. SFRP2 appears to be associated with myogenesis. This chain is Secreted frizzled-related protein 2 (SFRP2), found in Gallus gallus (Chicken).